A 238-amino-acid chain; its full sequence is Ribonuclease PH (238 aa).

Phosphate contacts are provided by residues R86 and 124–126 (GTR).

This sequence belongs to the RNase PH family. In terms of assembly, homohexameric ring arranged as a trimer of dimers.

The catalysed reaction is tRNA(n+1) + phosphate = tRNA(n) + a ribonucleoside 5'-diphosphate. In terms of biological role, phosphorolytic 3'-5' exoribonuclease that plays an important role in tRNA 3'-end maturation. Removes nucleotide residues following the 3'-CCA terminus of tRNAs; can also add nucleotides to the ends of RNA molecules by using nucleoside diphosphates as substrates, but this may not be physiologically important. Probably plays a role in initiation of 16S rRNA degradation (leading to ribosome degradation) during starvation. The sequence is that of Ribonuclease PH from Haemophilus influenzae (strain PittGG).